A 347-amino-acid chain; its full sequence is Purine-rich element-binding protein gamma (347 aa).

Disordered regions lie at residues methionine 1 to alanine 34 and glycine 133 to serine 169. Residues glycine 9–glycine 24 show a composition bias toward gly residues. The DNA-binding element occupies alanine 51–arginine 293. Over residues histidine 134 to serine 146 the composition is skewed to basic and acidic residues. Phosphoserine is present on residues serine 160, serine 163, and serine 339.

It belongs to the PUR DNA-binding protein family. As to expression, isoform 1 is expressed in testis and glioblastoma. Isoform 2 is expressed in fetal lung.

The protein resides in the nucleus. This is Purine-rich element-binding protein gamma (PURG) from Homo sapiens (Human).